The sequence spans 77 residues: uncharacterized protein (77 aa).

Residues 5-74 form the Inhibitor I9 domain; sequence SYIVQLKDSV…FEPDQEMHTM (70 aa).

It belongs to the protease inhibitor I9 family.

It is found in the cytoplasm. The protein localises to the nucleus. This is an uncharacterized protein from Schizosaccharomyces pombe (strain 972 / ATCC 24843) (Fission yeast).